The sequence spans 218 residues: Glutathione S-transferase U22 (218 aa).

Alanine 2 carries the post-translational modification N-acetylalanine. The GST N-terminal domain occupies 3–82 (DEVILLDFWP…YIDEVWSDKN (80 aa)). Residues 13–14 (SP), 39–40 (DK), 53–54 (KI), and 66–67 (ES) contribute to the glutathione site. The GST C-terminal domain occupies 88 to 208 (DPYQRAQARF…LHDSEKILAF (121 aa)). Threonine 149 bears the Phosphothreonine mark.

Belongs to the GST superfamily. Tau family.

It is found in the cytoplasm. The protein resides in the cytosol. It carries out the reaction RX + glutathione = an S-substituted glutathione + a halide anion + H(+). May be involved in the conjugation of reduced glutathione to a wide number of exogenous and endogenous hydrophobic electrophiles and have a detoxification role against certain herbicides. This Arabidopsis thaliana (Mouse-ear cress) protein is Glutathione S-transferase U22 (GSTU22).